The following is a 364-amino-acid chain: GTPase Obg (364 aa).

Residues 1-159 (MKFLDEAKVY…KTIWLHLKLI (159 aa)) form the Obg domain. An OBG-type G domain is found at 160 to 327 (ADAGLVGLPN…VLRALRDIIV (168 aa)). GTP is bound by residues 166–173 (GLPNAGKS), 191–195 (FTTLH), 212–215 (DIPG), 279–282 (SQID), and 308–310 (SAV). Serine 173 and threonine 193 together coordinate Mg(2+). Residues 333 to 364 (EKPAKVPKLRHRDMVVTDEGEDKGGDEGDDQP) form a disordered region.

Belongs to the TRAFAC class OBG-HflX-like GTPase superfamily. OBG GTPase family. In terms of assembly, monomer. Mg(2+) is required as a cofactor.

It is found in the cytoplasm. Its function is as follows. An essential GTPase which binds GTP, GDP and possibly (p)ppGpp with moderate affinity, with high nucleotide exchange rates and a fairly low GTP hydrolysis rate. Plays a role in control of the cell cycle, stress response, ribosome biogenesis and in those bacteria that undergo differentiation, in morphogenesis control. This is GTPase Obg from Rhizobium johnstonii (strain DSM 114642 / LMG 32736 / 3841) (Rhizobium leguminosarum bv. viciae).